We begin with the raw amino-acid sequence, 485 residues long: Dipeptide and tripeptide permease C (485 aa).

The Cytoplasmic portion of the chain corresponds to 1-12 (MKTPSQPRAIYY). Residues 13 to 33 (IVAIQIWEYFSFYGMRALLIL) form a helical membrane-spanning segment. Topologically, residues 34–46 (YLTHQLGFDDNHA) are periplasmic. Residues 47–67 (ISLFSAYASLVYVTPILGGWL) traverse the membrane as a helical segment. Over 68-70 (ADR) the chain is Cytoplasmic. A helical transmembrane segment spans residues 71-93 (LLGNRTAVIAGALLMTLGHVVLG). Topologically, residues 94 to 102 (IDTNSTFSL) are periplasmic. The helical transmembrane segment at 103–125 (YLALAIIICGYGLFKSNISCLLG) threads the bilayer. Residues 126–140 (ELYDENDHRRDGGFS) are Cytoplasmic-facing. The helical transmembrane segment at 141-161 (LLYAAGNIGSIAAPIACGLAA) threads the bilayer. Residues 162 to 164 (QWY) lie on the Periplasmic side of the membrane. Residues 165 to 185 (GWHVGFALAGGGMFIGLLIFL) traverse the membrane as a helical segment. Topologically, residues 186–208 (SGHRHFQSTRSMDKKALTSVKFA) are cytoplasmic. Residues 209 to 229 (LPVWSWLVVMLCLAPVFFTLL) traverse the membrane as a helical segment. At 230–234 (LENDW) the chain is on the periplasmic side. A helical transmembrane segment spans residues 235-255 (SGYLLAIVCLIAAQIIARMMI). Residues 256–262 (KFPEHRR) are Cytoplasmic-facing. Residues 263 to 283 (ALWQIVLLMFVGTLFWVLAQQ) traverse the membrane as a helical segment. Topologically, residues 284–307 (GGSTISLFIDRFVNRQAFNIEVPT) are periplasmic. Residues 308–328 (ALFQSVNAIAVMLAGVVLAWL) form a helical membrane-spanning segment. Residues 329-340 (ASPESRGNSTLR) are Cytoplasmic-facing. Residues 341 to 361 (VWLKFAFGLLLMACGFMLLAF) traverse the membrane as a helical segment. Topologically, residues 362-375 (DARHAAADGQASMG) are periplasmic. Residues 376-396 (VMISGLALMGFAELFIDPVAI) form a helical membrane-spanning segment. Over 397–406 (AQITRLKMSG) the chain is Cytoplasmic. A helical transmembrane segment spans residues 407 to 427 (VLTGIYMLATGAVANWLAGVV). Residues 428–446 (AQQTTESQISGMAIAAYQR) are Periplasmic-facing. The chain crosses the membrane as a helical span at residues 447-467 (FFSQMGEWTLACVAIIVVLAF). The Cytoplasmic portion of the chain corresponds to 468-485 (ATRFLFSTPTNMIQESND).

Belongs to the major facilitator superfamily. Proton-dependent oligopeptide transporter (POT/PTR) (TC 2.A.17) family. Monomer.

It localises to the cell inner membrane. Its function is as follows. Proton-dependent permease that transports di- and tripeptides. Shows significantly higher specificity towards dipeptides than tripeptides. Has a preference for dipeptides with a C-terminal Lys residue. Can bind Ala-Lys, Lys-Ala, Ala-Ala. Can also transport alanine and trialanine. The polypeptide is Dipeptide and tripeptide permease C (Escherichia coli (strain K12)).